A 293-amino-acid chain; its full sequence is Histone H3-like centromeric protein CSE4 (293 aa).

Acidic residues predominate over residues 132 to 141; the sequence is QDLSYDESDY. The disordered stretch occupies residues 132-169; sequence QDLSYDESDYSDPLQEIDSNYRESPRRTTDKILKSSSK. Residues 150–164 show a composition bias toward basic and acidic residues; sequence SNYRESPRRTTDKIL. The H3-like stretch occupies residues 157–291; that stretch reads RRTTDKILKS…VQLARRIRGQ (135 aa).

It belongs to the histone H3 family. Component of centromeric nucleosomes, where DNA is wrapped around a histone octamer core. The octamer contains two molecules each of H2A, H2B, CSE4/CENPA and H4 assembled in one CSE4-H4 heterotetramer and two H2A-H2B heterodimers. Interacts with the inner kinetochore. Ubiquitinated. Is degraded through ubiquitin-mediated proteolysis when not protected by its association to the kinetochore.

It localises to the nucleus. The protein localises to the chromosome. It is found in the centromere. Functionally, histone H3-like nucleosomal protein that is specifically found in centromeric nucleosomes. Replaces conventional H3 in the nucleosome core of centromeric chromatin that serves as an assembly site for the inner kinetochore. Required for recruitment and assembly of kinetochore proteins, mitotic progression and chromosome segregation. May serve as an epigenetic mark that propagates centromere identity through replication and cell division. The polypeptide is Histone H3-like centromeric protein CSE4 (CSE4) (Monosporozyma servazzii (Yeast)).